A 157-amino-acid polypeptide reads, in one-letter code: Ribosome maturation factor RimP (157 aa).

Belongs to the RimP family.

The protein localises to the cytoplasm. Required for maturation of 30S ribosomal subunits. This is Ribosome maturation factor RimP from Bacillus pumilus (strain SAFR-032).